The following is a 64-amino-acid chain: Large ribosomal subunit protein uL1 (64 aa).

The protein belongs to the universal ribosomal protein uL1 family. In terms of assembly, part of the 50S ribosomal subunit.

Functionally, binds directly to 23S rRNA. The L1 stalk is quite mobile in the ribosome, and is involved in E site tRNA release. Its function is as follows. Protein L1 is also a translational repressor protein, it controls the translation of the L11 operon by binding to its mRNA. This is Large ribosomal subunit protein uL1 (rplA) from Streptomyces lavendulae.